Reading from the N-terminus, the 297-residue chain is 4-hydroxy-tetrahydrodipicolinate synthase (297 aa).

Thr47 serves as a coordination point for pyruvate. Catalysis depends on Tyr135, which acts as the Proton donor/acceptor. Lys163 acts as the Schiff-base intermediate with substrate in catalysis. Ile205 is a pyruvate binding site.

This sequence belongs to the DapA family. Homotetramer; dimer of dimers.

It is found in the cytoplasm. The catalysed reaction is L-aspartate 4-semialdehyde + pyruvate = (2S,4S)-4-hydroxy-2,3,4,5-tetrahydrodipicolinate + H2O + H(+). It functions in the pathway amino-acid biosynthesis; L-lysine biosynthesis via DAP pathway; (S)-tetrahydrodipicolinate from L-aspartate: step 3/4. In terms of biological role, catalyzes the condensation of (S)-aspartate-beta-semialdehyde [(S)-ASA] and pyruvate to 4-hydroxy-tetrahydrodipicolinate (HTPA). The polypeptide is 4-hydroxy-tetrahydrodipicolinate synthase (Dehalococcoides mccartyi (strain ATCC BAA-2100 / JCM 16839 / KCTC 5957 / BAV1)).